Here is a 224-residue protein sequence, read N- to C-terminus: Envelope glycoprotein L (224 aa).

The signal sequence occupies residues 1-22 (MGILGWVGLIAVGVLCVRGGLS). The segment at 20–161 (GLSSTEYVIR…FDYSRTRRCV (142 aa)) is interaction with gH. Residues 20–161 (GLSSTEYVIR…FDYSRTRRCV (142 aa)) are interaction with gL. The 179-residue stretch at 23–201 (STEYVIRSRV…LTTPPPIIAT (179 aa)) folds into the gL alphaherpesvirus-type domain. Cystine bridges form between Cys44/Cys76 and Cys149/Cys160. The segment at 161 to 224 (VGRQDLGPTN…RRRRPHSRRL (64 aa)) is disordered. Asn170 carries N-linked (GlcNAc...) asparagine; by host glycosylation. Basic residues predominate over residues 213–224 (KSRRRRPHSRRL).

The protein belongs to the herpesviridae glycoprotein L (gL) family. Alphaherpesvirinae gL subfamily. As to quaternary structure, interacts with glycoprotein H (gH); this interaction is necessary for the correct processing and cell surface expression of gH. The heterodimer gH/gL seems to interact with gB trimers during fusion. N-glycosylated, O-glycosylated, and sialylated.

The protein resides in the virion membrane. It localises to the host cell membrane. Its subcellular location is the host Golgi apparatus. It is found in the host trans-Golgi network. Functionally, the heterodimer glycoprotein H-glycoprotein L is required for the fusion of viral and plasma membranes leading to virus entry into the host cell. Acts as a functional inhibitor of gH and maintains gH in an inhibited form. Upon binding to host integrins, gL dissociates from gH leading to activation of the viral fusion glycoproteins gB and gH. This Human herpesvirus 1 (strain KOS) (HHV-1) protein is Envelope glycoprotein L.